Here is a 346-residue protein sequence, read N- to C-terminus: Very-long-chain 3-oxoacyl-CoA reductase (346 aa).

The helical transmembrane segment at 26–46 (SAYFLLAAGSLFVASRALTFV) threads the bilayer. Positions 71, 126, 134, 153, 220, 224, 253, and 255 each coordinate NADP(+). Tyr220 serves as the catalytic Proton donor. The Lowers pKa of active site Tyr role is filled by Lys224.

Belongs to the short-chain dehydrogenases/reductases (SDR) family.

It localises to the endoplasmic reticulum membrane. It catalyses the reaction a very-long-chain (3R)-3-hydroxyacyl-CoA + NADP(+) = a very-long-chain 3-oxoacyl-CoA + NADPH + H(+). It participates in lipid metabolism; fatty acid biosynthesis. Functionally, component of the microsomal membrane bound fatty acid elongation system, which produces the 26-carbon very long-chain fatty acids (VLCFA) from palmitate. Catalyzes the reduction of the 3-ketoacyl-CoA intermediate that is formed in each cycle of fatty acid elongation. VLCFAs serve as precursors for ceramide and sphingolipids. This Aspergillus oryzae (strain ATCC 42149 / RIB 40) (Yellow koji mold) protein is Very-long-chain 3-oxoacyl-CoA reductase.